The following is a 253-amino-acid chain: Pimeloyl-[acyl-carrier protein] methyl ester esterase (253 aa).

Substrate-binding positions include Trp-18, 78–79, and 139–143; these read SL and FLALD. Ser-78 (nucleophile) is an active-site residue. Active-site residues include Asp-203 and His-231. His-231 contributes to the substrate binding site.

The protein belongs to the AB hydrolase superfamily. Carboxylesterase BioH family. As to quaternary structure, monomer.

The protein resides in the cytoplasm. It catalyses the reaction 6-carboxyhexanoyl-[ACP] methyl ester + H2O = 6-carboxyhexanoyl-[ACP] + methanol + H(+). It participates in cofactor biosynthesis; biotin biosynthesis. Its function is as follows. The physiological role of BioH is to remove the methyl group introduced by BioC when the pimeloyl moiety is complete. It allows to synthesize pimeloyl-ACP via the fatty acid synthetic pathway through the hydrolysis of the ester bonds of pimeloyl-ACP esters. This Xanthomonas axonopodis pv. citri (strain 306) protein is Pimeloyl-[acyl-carrier protein] methyl ester esterase.